Here is a 96-residue protein sequence, read N- to C-terminus: Cytochrome c oxidase assembly factor 3 homolog, mitochondrial (96 aa).

At 1 to 50 the chain is on the mitochondrial matrix side; that stretch reads MSSQGEPKPEAQFAKRIDPTKEALTKEQLQFIRQVEMAQWKKKTDKLRGR. A helical transmembrane segment spans residues 51-73; the sequence is NVATGLAIGAVVLGIYGYTFYSV. Residues 74-96 are Mitochondrial intermembrane-facing; the sequence is SQEKIMDEIDEEAKVRVPKTGAN.

This sequence belongs to the COA3 family. As to quaternary structure, core component of the MITRAC (mitochondrial translation regulation assembly intermediate of cytochrome c oxidase complex) complex.

Its subcellular location is the mitochondrion inner membrane. In terms of biological role, core component of the MITRAC (mitochondrial translation regulation assembly intermediate of cytochrome c oxidase complex) complex, that regulates cytochrome c oxidase assembly. MITRAC complexes regulate both translation of mitochondrial encoded components and assembly of nuclear-encoded components imported in mitochondrion. Required for efficient translation of MT-CO1 and mitochondrial respiratory chain complex IV assembly. The polypeptide is Cytochrome c oxidase assembly factor 3 homolog, mitochondrial (coa3a) (Danio rerio (Zebrafish)).